A 755-amino-acid chain; its full sequence is Exocyst complex component 3 (755 aa).

Lys38 is subject to N6-acetyllysine.

The protein belongs to the SEC6 family. The exocyst complex is composed of EXOC1, EXOC2, EXOC3, EXOC4, EXOC5, EXOC6, EXOC7 and EXOC8. Interacts with EXOC3L1. Interacts with BIRC6/bruce. Interacts with MYRIP. Interacts with SLC6A9.

It localises to the cytoplasm. The protein resides in the perinuclear region. The protein localises to the cell projection. It is found in the growth cone. Its subcellular location is the midbody. It localises to the golgi apparatus. The protein resides in the neuron projection. In terms of biological role, component of the exocyst complex involved in the docking of exocytic vesicles with fusion sites on the plasma membrane. The polypeptide is Exocyst complex component 3 (Exoc3) (Mus musculus (Mouse)).